The following is a 183-amino-acid chain: Threonylcarbamoyl-AMP synthase (183 aa).

In terms of domain architecture, YrdC-like spans 1–183 (MNREQIADAL…LRTNQLFRQG (183 aa)).

Belongs to the SUA5 family. TsaC subfamily.

It is found in the cytoplasm. The enzyme catalyses L-threonine + hydrogencarbonate + ATP = L-threonylcarbamoyladenylate + diphosphate + H2O. Required for the formation of a threonylcarbamoyl group on adenosine at position 37 (t(6)A37) in tRNAs that read codons beginning with adenine. Catalyzes the conversion of L-threonine, HCO(3)(-)/CO(2) and ATP to give threonylcarbamoyl-AMP (TC-AMP) as the acyladenylate intermediate, with the release of diphosphate. The polypeptide is Threonylcarbamoyl-AMP synthase (Haemophilus influenzae (strain ATCC 51907 / DSM 11121 / KW20 / Rd)).